Here is a 328-residue protein sequence, read N- to C-terminus: UDP-glucose 4-epimerase (328 aa).

Thr119 contributes to the substrate binding site. Tyr143 (proton acceptor) is an active-site residue.

It belongs to the NAD(P)-dependent epimerase/dehydratase family. Requires NAD(+) as cofactor.

It carries out the reaction UDP-alpha-D-glucose = UDP-alpha-D-galactose. It participates in carbohydrate metabolism; galactose metabolism. The protein operates within glycan metabolism; exopolysaccharide biosynthesis. In Rhizobium meliloti (strain 1021) (Ensifer meliloti), this protein is UDP-glucose 4-epimerase (exoB).